A 379-amino-acid polypeptide reads, in one-letter code: UDP-N-acetylglucosamine--N-acetylmuramyl-(pentapeptide) pyrophosphoryl-undecaprenol N-acetylglucosamine transferase (379 aa).

UDP-N-acetyl-alpha-D-glucosamine is bound by residues 17–19 (TGG), N128, R169, S197, and Q298.

It belongs to the glycosyltransferase 28 family. MurG subfamily.

The protein localises to the cell inner membrane. The catalysed reaction is di-trans,octa-cis-undecaprenyl diphospho-N-acetyl-alpha-D-muramoyl-L-alanyl-D-glutamyl-meso-2,6-diaminopimeloyl-D-alanyl-D-alanine + UDP-N-acetyl-alpha-D-glucosamine = di-trans,octa-cis-undecaprenyl diphospho-[N-acetyl-alpha-D-glucosaminyl-(1-&gt;4)]-N-acetyl-alpha-D-muramoyl-L-alanyl-D-glutamyl-meso-2,6-diaminopimeloyl-D-alanyl-D-alanine + UDP + H(+). It functions in the pathway cell wall biogenesis; peptidoglycan biosynthesis. Cell wall formation. Catalyzes the transfer of a GlcNAc subunit on undecaprenyl-pyrophosphoryl-MurNAc-pentapeptide (lipid intermediate I) to form undecaprenyl-pyrophosphoryl-MurNAc-(pentapeptide)GlcNAc (lipid intermediate II). The protein is UDP-N-acetylglucosamine--N-acetylmuramyl-(pentapeptide) pyrophosphoryl-undecaprenol N-acetylglucosamine transferase of Brucella suis (strain ATCC 23445 / NCTC 10510).